The following is a 221-amino-acid chain: Thymidylate kinase (221 aa).

11 to 18 contributes to the ATP binding site; that stretch reads GPDGAGKT.

Belongs to the thymidylate kinase family.

The catalysed reaction is dTMP + ATP = dTDP + ADP. In terms of biological role, phosphorylation of dTMP to form dTDP in both de novo and salvage pathways of dTTP synthesis. The protein is Thymidylate kinase of Lactiplantibacillus plantarum (strain ATCC BAA-793 / NCIMB 8826 / WCFS1) (Lactobacillus plantarum).